The following is a 396-amino-acid chain: Elongation factor Tu (396 aa).

The tr-type G domain maps to 10–206 (KPHVNVGTIG…ALDTYIPTPE (197 aa)). A G1 region spans residues 19–26 (GHVDHGKT). 19-26 (GHVDHGKT) is a binding site for GTP. Thr26 contacts Mg(2+). The G2 stretch occupies residues 60-64 (GITIN). The segment at 81 to 84 (DCPG) is G3. GTP contacts are provided by residues 81 to 85 (DCPGH) and 136 to 139 (NKCD). The tract at residues 136-139 (NKCD) is G4. Positions 174–176 (SAK) are G5.

Belongs to the TRAFAC class translation factor GTPase superfamily. Classic translation factor GTPase family. EF-Tu/EF-1A subfamily. As to quaternary structure, monomer.

It localises to the cytoplasm. It catalyses the reaction GTP + H2O = GDP + phosphate + H(+). GTP hydrolase that promotes the GTP-dependent binding of aminoacyl-tRNA to the A-site of ribosomes during protein biosynthesis. This chain is Elongation factor Tu, found in Cupriavidus necator (strain ATCC 17699 / DSM 428 / KCTC 22496 / NCIMB 10442 / H16 / Stanier 337) (Ralstonia eutropha).